Reading from the N-terminus, the 374-residue chain is UDP-N-acetylglucosamine--N-acetylmuramyl-(pentapeptide) pyrophosphoryl-undecaprenol N-acetylglucosamine transferase (374 aa).

UDP-N-acetyl-alpha-D-glucosamine-binding positions include 13-15 (TGG), Asn-124, Arg-165, Ser-193, and Gln-294.

This sequence belongs to the glycosyltransferase 28 family. MurG subfamily.

It is found in the cell inner membrane. The catalysed reaction is di-trans,octa-cis-undecaprenyl diphospho-N-acetyl-alpha-D-muramoyl-L-alanyl-D-glutamyl-meso-2,6-diaminopimeloyl-D-alanyl-D-alanine + UDP-N-acetyl-alpha-D-glucosamine = di-trans,octa-cis-undecaprenyl diphospho-[N-acetyl-alpha-D-glucosaminyl-(1-&gt;4)]-N-acetyl-alpha-D-muramoyl-L-alanyl-D-glutamyl-meso-2,6-diaminopimeloyl-D-alanyl-D-alanine + UDP + H(+). It functions in the pathway cell wall biogenesis; peptidoglycan biosynthesis. Cell wall formation. Catalyzes the transfer of a GlcNAc subunit on undecaprenyl-pyrophosphoryl-MurNAc-pentapeptide (lipid intermediate I) to form undecaprenyl-pyrophosphoryl-MurNAc-(pentapeptide)GlcNAc (lipid intermediate II). This is UDP-N-acetylglucosamine--N-acetylmuramyl-(pentapeptide) pyrophosphoryl-undecaprenol N-acetylglucosamine transferase from Sinorhizobium medicae (strain WSM419) (Ensifer medicae).